The primary structure comprises 169 residues: Inorganic pyrophosphatase (169 aa).

At methionine 1 the chain carries N-formylmethionine. Residues lysine 28, arginine 42, and tyrosine 54 each contribute to the substrate site. Residues aspartate 64, aspartate 69, and aspartate 101 each contribute to the Mg(2+) site. Tyrosine 138 is a substrate binding site.

This sequence belongs to the PPase family. Homohexamer. Mg(2+) is required as a cofactor.

Its subcellular location is the cytoplasm. The catalysed reaction is diphosphate + H2O = 2 phosphate + H(+). Its activity is regulated as follows. Inhibited by ATP, but not by fructose 1,6-bisphosphate or 2-phosphoglycerate. Hydrolyzes PPi generated in anabolic reactions. In terms of biological role, catalyzes the hydrolysis of inorganic pyrophosphate (PPi) forming two phosphate ions. In Synechocystis sp. (strain ATCC 27184 / PCC 6803 / Kazusa), this protein is Inorganic pyrophosphatase.